The primary structure comprises 76 residues: Large ribosomal subunit protein eL29 (76 aa).

A compositionally biased stretch (basic residues) spans M1–H29. Disordered stretches follow at residues M1–L33 and R47–L76. Residue S31 is modified to Phosphoserine. Residues L51–E62 show a composition bias toward basic and acidic residues.

This sequence belongs to the eukaryotic ribosomal protein eL29 family.

In Drosophila melanogaster (Fruit fly), this protein is Large ribosomal subunit protein eL29 (RpL29).